A 138-amino-acid chain; its full sequence is Basic phospholipase A2 Bs-N6 (138 aa).

An N-terminal signal peptide occupies residues Met-1–Gly-16. Intrachain disulfides connect Cys-42/Cys-131, Cys-44/Cys-60, Cys-59/Cys-111, Cys-65/Cys-138, Cys-66/Cys-104, Cys-73/Cys-97, and Cys-91/Cys-102. Ca(2+)-binding residues include Tyr-43, Gly-45, and Gly-47. The active site involves His-63. Asp-64 contributes to the Ca(2+) binding site. The active site involves Asp-105.

Monomer. Requires Ca(2+) as cofactor. Post-translationally, contains 7 disulfide bonds. As to expression, expressed by the venom gland.

Its subcellular location is the secreted. The enzyme catalyses a 1,2-diacyl-sn-glycero-3-phosphocholine + H2O = a 1-acyl-sn-glycero-3-phosphocholine + a fatty acid + H(+). Its function is as follows. Snake venom phospholipase A2 (PLA2) that shows myotoxic activities. PLA2 catalyzes the calcium-dependent hydrolysis of the 2-acyl groups in 3-sn-phosphoglycerides. The sequence is that of Basic phospholipase A2 Bs-N6 from Bothriechis schlegelii (Eyelash palm pitviper).